Reading from the N-terminus, the 300-residue chain is Protoheme IX farnesyltransferase (300 aa).

Helical transmembrane passes span 20-40 (ITKM…YFLG), 43-63 (TIDF…VGAS), 94-114 (PVAF…LYVI), 116-136 (PKTA…YTPL), 142-162 (LSVF…WVAA), 173-193 (LFMI…WWLF), 215-235 (IQII…VFGV), 241-261 (LTPV…YYAI), and 276-296 (MFAS…DKFI).

This sequence belongs to the UbiA prenyltransferase family. Protoheme IX farnesyltransferase subfamily.

It localises to the cell membrane. The enzyme catalyses heme b + (2E,6E)-farnesyl diphosphate + H2O = Fe(II)-heme o + diphosphate. The protein operates within porphyrin-containing compound metabolism; heme O biosynthesis; heme O from protoheme: step 1/1. Converts heme B (protoheme IX) to heme O by substitution of the vinyl group on carbon 2 of heme B porphyrin ring with a hydroxyethyl farnesyl side group. The protein is Protoheme IX farnesyltransferase of Christiangramia forsetii (strain DSM 17595 / CGMCC 1.15422 / KT0803) (Gramella forsetii).